An 88-amino-acid chain; its full sequence is Small ribosomal subunit protein bS20 (88 aa).

Positions 1–26 (MANTAQARKRARQNTKRRQNSASQRS) are disordered. The span at 7–19 (ARKRARQNTKRRQ) shows a compositional bias: basic residues.

Belongs to the bacterial ribosomal protein bS20 family.

Functionally, binds directly to 16S ribosomal RNA. The polypeptide is Small ribosomal subunit protein bS20 (Psychrobacter arcticus (strain DSM 17307 / VKM B-2377 / 273-4)).